Here is a 363-residue protein sequence, read N- to C-terminus: Ferredoxin--NADP reductase, cyanelle (363 aa).

Residues 1–65 constitute a cyanelle transit peptide; sequence MAFVASVPVF…TFEVDTTIRA (65 aa). In terms of domain architecture, FAD-binding FR-type spans 84–206; it reads ANPYIGKCIY…TGPVGTTMLM (123 aa). FAD is bound by residues 142 to 145, 163 to 165, Y169, 180 to 182, and T221; these read RLYS, SVK, and VCS. The NADP(+) site is built by S145 and K165. Residues T221, 253–254, 283–284, K293, 322–323, and E361 contribute to the NADP(+) site; these read VP, SR, and GL.

It belongs to the ferredoxin--NADP reductase type 1 family. The cofactor is FAD.

It localises to the plastid. Its subcellular location is the cyanelle stroma. It is found in the cyanelle thylakoid membrane. It catalyses the reaction 2 reduced [2Fe-2S]-[ferredoxin] + NADP(+) + H(+) = 2 oxidized [2Fe-2S]-[ferredoxin] + NADPH. May play a key role in regulating the relative amounts of cyclic and non-cyclic electron flow to meet the demands of the plant for ATP and reducing power. In Cyanophora paradoxa, this protein is Ferredoxin--NADP reductase, cyanelle (PETH).